A 120-amino-acid polypeptide reads, in one-letter code: uncharacterized protein (120 aa).

This sequence to phage T4 y06Q.

This is an uncharacterized protein from Escherichia coli (strain K12).